A 184-amino-acid chain; its full sequence is NADH-quinone oxidoreductase subunit B (184 aa).

Residues C63, C64, C128, and C158 each coordinate [4Fe-4S] cluster.

It belongs to the complex I 20 kDa subunit family. As to quaternary structure, NDH-1 is composed of 14 different subunits. Subunits NuoB, C, D, E, F, and G constitute the peripheral sector of the complex. Requires [4Fe-4S] cluster as cofactor.

It localises to the cell inner membrane. It carries out the reaction a quinone + NADH + 5 H(+)(in) = a quinol + NAD(+) + 4 H(+)(out). Functionally, NDH-1 shuttles electrons from NADH, via FMN and iron-sulfur (Fe-S) centers, to quinones in the respiratory chain. The immediate electron acceptor for the enzyme in this species is believed to be ubiquinone. Couples the redox reaction to proton translocation (for every two electrons transferred, four hydrogen ions are translocated across the cytoplasmic membrane), and thus conserves the redox energy in a proton gradient. This is NADH-quinone oxidoreductase subunit B from Xylella fastidiosa (strain M12).